A 247-amino-acid polypeptide reads, in one-letter code: Chymase (247 aa).

Residues 1-17 form the signal peptide; sequence MCLLSLPLLLFLQYTRA. Positions 18–21 are cleaved as a propeptide — activation peptide; that stretch reads KAGE. Positions 22-245 constitute a Peptidase S1 domain; it reads VIGGTECKPH…YRPWINKILK (224 aa). Cysteines 51 and 67 form a disulfide. The active-site Charge relay system is His-66. N-linked (GlcNAc...) asparagine glycosylation is present at Asn-103. The Charge relay system role is filled by Asp-110. An N-linked (GlcNAc...) asparagine glycan is attached at Asn-121. Intrachain disulfides connect Cys-144-Cys-209 and Cys-175-Cys-188. Ser-203 functions as the Charge relay system in the catalytic mechanism.

Belongs to the peptidase S1 family. Granzyme subfamily.

It localises to the secreted. The protein resides in the cytoplasmic granule. The enzyme catalyses Preferential cleavage: Phe-|-Xaa &gt; Tyr-|-Xaa &gt; Trp-|-Xaa &gt; Leu-|-Xaa.. Major secreted protease of mast cells with suspected roles in vasoactive peptide generation, extracellular matrix degradation, and regulation of gland secretion. This chain is Chymase, found in Cavia porcellus (Guinea pig).